A 438-amino-acid polypeptide reads, in one-letter code: Serine hydroxymethyltransferase (438 aa).

(6S)-5,6,7,8-tetrahydrofolate contacts are provided by residues L133 and 137 to 139; that span reads GHL. K242 bears the N6-(pyridoxal phosphate)lysine mark.

It belongs to the SHMT family. As to quaternary structure, homodimer. It depends on pyridoxal 5'-phosphate as a cofactor.

The protein resides in the cytoplasm. It catalyses the reaction (6R)-5,10-methylene-5,6,7,8-tetrahydrofolate + glycine + H2O = (6S)-5,6,7,8-tetrahydrofolate + L-serine. The protein operates within one-carbon metabolism; tetrahydrofolate interconversion. Its pathway is amino-acid biosynthesis; glycine biosynthesis; glycine from L-serine: step 1/1. Catalyzes the reversible interconversion of serine and glycine with tetrahydrofolate (THF) serving as the one-carbon carrier. This reaction serves as the major source of one-carbon groups required for the biosynthesis of purines, thymidylate, methionine, and other important biomolecules. Also exhibits THF-independent aldolase activity toward beta-hydroxyamino acids, producing glycine and aldehydes, via a retro-aldol mechanism. This is Serine hydroxymethyltransferase from Brucella ovis (strain ATCC 25840 / 63/290 / NCTC 10512).